The primary structure comprises 46 residues: Cystatin WCPI-3 (46 aa).

The short motif at 35–38 (VVAG) is the Secondary area of contact element.

This sequence belongs to the cystatin family. Phytocystatin subfamily.

Inhibitor of papain. The protein is Cystatin WCPI-3 of Wisteria floribunda (Japanese wisteria).